The chain runs to 196 residues: Inosine triphosphate pyrophosphatase 2 (196 aa).

20-25 contributes to the ITP binding site; sequence TGNDGK. E48 lines the Mg(2+) pocket. ITP-binding positions include K61, 77 to 78, K94, 153 to 156, K177, and 182 to 183; these read DT, FGWD, and PR.

The protein belongs to the HAM1 NTPase family. Homodimer. It depends on Mg(2+) as a cofactor. Mn(2+) is required as a cofactor.

Its subcellular location is the cytoplasm. It carries out the reaction ITP + H2O = IMP + diphosphate + H(+). It catalyses the reaction dITP + H2O = dIMP + diphosphate + H(+). The catalysed reaction is XTP + H2O = XMP + diphosphate + H(+). Its function is as follows. Pyrophosphatase that hydrolyzes non-canonical purine nucleotides such as inosine triphosphate (ITP), deoxyinosine triphosphate (dITP) or xanthosine 5'-triphosphate (XTP) to their respective monophosphate derivatives. The enzyme does not distinguish between the deoxy- and ribose forms. Probably excludes non-canonical purines from RNA and DNA precursor pools, thus preventing their incorporation into RNA and DNA and avoiding chromosomal lesions. In Trypanosoma cruzi (strain CL Brener), this protein is Inosine triphosphate pyrophosphatase 2.